Here is a 158-residue protein sequence, read N- to C-terminus: Protein Smg homolog (158 aa).

Belongs to the Smg family.

This chain is Protein Smg homolog, found in Shewanella sp. (strain MR-4).